Reading from the N-terminus, the 158-residue chain is Interleukin-17A (158 aa).

Residues 1-25 form the signal peptide; that stretch reads MSPGRASSVSLMLLLLLSLAATVKA. Asn71 carries N-linked (GlcNAc...) asparagine glycosylation. Disulfide bonds link Cys97-Cys147 and Cys102-Cys149.

It belongs to the IL-17 family. Homodimer. Forms complexes with IL17RA and IL17RC receptors with 2:1 binding stoichiometry: two receptor chains for one interleukin molecule. IL17A homodimer preferentially drives the formation of IL17RA-IL17RC heterodimeric receptor complex. IL17A homodimer adopts an asymmetrical ternary structure with one IL17RA molecule, allowing for high affinity interactions of one IL17A monomer with one IL17RA molecule (via D1 and D2 domains), while disfavoring binding of a second IL17RA molecule on the other IL17A monomer. Heterodimer with IL17F. IL17A-IL17F forms complexes with IL17RA-IL17RC, but with lower affinity when compared to IL17A homodimer. IL17RA and IL17RC chains cannot distinguish between IL17A and IL17F molecules, potentially enabling the formation of topologically distinct complexes. As to expression, expressed by Th17 cell lineage (at protein level). The expression pattern reflects the differentiation state, with IL17A-IL17F heterodimers produced at higher levels than IL17A-IL17A and IL17F-IL17F dimers in fully differentiated Th17 cells. Expressed in innate lymphoid cells (at protein level). Expressed in gamma-delta T cell subsets (at protein level). Expressed in iNKT cells (at protein level).

It localises to the secreted. Functionally, effector cytokine of innate and adaptive immune system involved in antimicrobial host defense and maintenance of tissue integrity. Signals via IL17RA-IL17RC heterodimeric receptor complex, triggering homotypic interaction of IL17RA and IL17RC chains with TRAF3IP2 adapter. This leads to downstream TRAF6-mediated activation of NF-kappa-B and MAPkinase pathways ultimately resulting in transcriptional activation of cytokines, chemokines, antimicrobial peptides and matrix metalloproteinases, with potential strong immune inflammation. Plays an important role in connecting T cell-mediated adaptive immunity and acute inflammatory response to destroy extracellular bacteria and fungi. As a signature effector cytokine of T-helper 17 cells (Th17), primarily induces neutrophil activation and recruitment at infection and inflammatory sites. In airway epithelium, mediates neutrophil chemotaxis via induction of CXCL1 and CXCL5 chemokines. In secondary lymphoid organs, contributes to germinal center formation by regulating the chemotactic response of B cells to CXCL12 and CXCL13, enhancing retention of B cells within the germinal centers, B cell somatic hypermutation rate and selection toward plasma cells. Effector cytokine of a subset of gamma-delta T cells that functions as part of an inflammatory circuit downstream IL1B, TLR2 and IL23A-IL12B to promote neutrophil recruitment for efficient bacterial clearance. Effector cytokine of innate immune cells including invariant natural killer cell (iNKT) and group 3 innate lymphoid cells that mediate initial neutrophilic inflammation. Involved in the maintenance of the integrity of epithelial barriers during homeostasis and pathogen infection. Upon acute injury, has a direct role in epithelial barrier formation by regulating OCLN localization and tight junction biogenesis. As part of the mucosal immune response induced by commensal bacteria, enhances host's ability to resist pathogenic bacterial and fungal infections by promoting neutrophil recruitment and antimicrobial peptides release. In synergy with IL17F, mediates the production of antimicrobial beta-defensins DEFB1, DEFB103A, and DEFB104A by mucosal epithelial cells, limiting the entry of microbes through the epithelial barriers. Involved in antiviral host defense through various mechanisms. Enhances immunity against West Nile virus by promoting T cell cytotoxicity. May play a beneficial role in influenza A virus (H5N1) infection by enhancing B cell recruitment and immune response in the lung. Contributes to influenza A virus (H1N1) clearance by driving the differentiation of B-1a B cells, providing for production of virus-specific IgM antibodies at first line of host defense. The polypeptide is Interleukin-17A (Il17a) (Mus musculus (Mouse)).